Here is a 642-residue protein sequence, read N- to C-terminus: tRNA uridine 5-carboxymethylaminomethyl modification enzyme MnmG (642 aa).

FAD contacts are provided by residues 10-15 (GAGHAG), Val-122, and Ser-177. 269–283 (SARYCPSLEDKVMRF) lines the NAD(+) pocket. Gln-366 lines the FAD pocket.

It belongs to the MnmG family. In terms of assembly, homodimer. Heterotetramer of two MnmE and two MnmG subunits. FAD serves as cofactor.

It localises to the cytoplasm. Functionally, NAD-binding protein involved in the addition of a carboxymethylaminomethyl (cmnm) group at the wobble position (U34) of certain tRNAs, forming tRNA-cmnm(5)s(2)U34. In Syntrophobacter fumaroxidans (strain DSM 10017 / MPOB), this protein is tRNA uridine 5-carboxymethylaminomethyl modification enzyme MnmG.